The primary structure comprises 1079 residues: Adhesion G-protein coupled receptor F3 (1079 aa).

The N-terminal stretch at 1-25 is a signal peptide; sequence MVCSAAPLLLLATTLPLLGSPVAQA. Over 26–775 the chain is Extracellular; it reads SQPVSETGVR…EEPALALLTQ (750 aa). Asn188, Asn264, Asn301, Asn382, Asn441, and Asn648 each carry an N-linked (GlcNAc...) asparagine glycan. Residues 599–765 form the GAIN-B domain; the sequence is HPFAFSLPNV…SVLMSPHTVP (167 aa). Disulfide bonds link Cys715–Cys747 and Cys734–Cys749. The segment at 715-765 is GPS; it reads CVFWDHSLFQGRGGWSKEGCQAQVASASPTAQCLCQHLTAFSVLMSPHTVP. Residues 776 to 796 traverse the membrane as a helical segment; sequence VGLGASILALLVCLGVYWLVW. The Cytoplasmic segment spans residues 797–811; sequence RVVVRNKISYFRHAA. The helical transmembrane segment at 812-832 threads the bilayer; that stretch reads LLNMVFCLLAADTCFLGAPFL. The Extracellular segment spans residues 833–851; it reads SPGPRSPLCLAAAFLCHFL. The helical transmembrane segment at 852 to 874 threads the bilayer; the sequence is YLATFFWMLAQALVLAHQLLFVF. At 875-881 the chain is on the cytoplasmic side; it reads HQLAKHR. The helical transmembrane segment at 882–902 threads the bilayer; the sequence is VLPLMVLLGYLCPLGLAGVTL. The Extracellular segment spans residues 903-928; sequence GLYLPQGQYLREGECWLDGKGGALYT. A helical transmembrane segment spans residues 929–949; it reads FVGPVLAIIGVNGLVLAMAML. The Cytoplasmic portion of the chain corresponds to 950 to 973; the sequence is KLLRPSLSEGPPAEKRQALLGVIK. Residues 974-994 form a helical membrane-spanning segment; that stretch reads ALLILTPIFGLTWGLGLATLL. The Extracellular portion of the chain corresponds to 995–1002; that stretch reads EEVSTVPH. A helical transmembrane segment spans residues 1003 to 1023; that stretch reads YIFTILNTLQGVFILLFGCLM. Residues 1024–1079 lie on the Cytoplasmic side of the membrane; sequence DRKIQEALRKRFCRAQAPSSTISLVSCCLQILSCASKSMSEGIPWPSSEDMGTARS.

It belongs to the G-protein coupled receptor 2 family. Adhesion G-protein coupled receptor (ADGR) subfamily. As to quaternary structure, heterodimer of 2 chains generated by proteolytic processing; the large extracellular N-terminal fragment and the membrane-bound C-terminal fragment predominantly remain associated and non-covalently linked. In terms of processing, autoproteolytically processed at the GPS region of the GAIN-B domain; this cleavage modulates receptor activity.

The protein localises to the membrane. Its function is as follows. Orphan receptor. The protein is Adhesion G-protein coupled receptor F3 (ADGRF3) of Homo sapiens (Human).